We begin with the raw amino-acid sequence, 359 residues long: Probable L-ascorbate peroxidase 7, chloroplastic (359 aa).

A chloroplast-targeting transit peptide spans 1–71; the sequence is MAAQRLAALH…KAAGSGRSVM (71 aa). H118 serves as the catalytic Proton acceptor. H247 lines the heme b pocket. Residue T248 coordinates K(+). The segment at 251-277 is disordered; it reads RSRPERSGWGKPETKYTKNGPGAPGGQ. Positions 252 to 266 are enriched in basic and acidic residues; sequence SRPERSGWGKPETKY. Residues T280 and D287 each coordinate K(+).

Belongs to the peroxidase family. Ascorbate peroxidase subfamily. Heme b is required as a cofactor. Expressed in roots, leaves, stems and flowers.

The protein localises to the plastid. It is found in the chloroplast stroma. It catalyses the reaction L-ascorbate + H2O2 = L-dehydroascorbate + 2 H2O. Its function is as follows. Plays a key role in hydrogen peroxide removal. The chain is Probable L-ascorbate peroxidase 7, chloroplastic from Oryza sativa subsp. japonica (Rice).